Here is a 437-residue protein sequence, read N- to C-terminus: Keratin, type I cytoskeletal 13 (437 aa).

The head stretch occupies residues 1–95 (MSCRFQSSSM…GVDGGLLSGN (95 aa)). Arg27 and Arg35 each carry omega-N-methylarginine. The coil 1A stretch occupies residues 96 to 131 (EKITMQNLNDRLASYLDKVRALEAANADLEVKIRDW). The IF rod domain occupies 96 to 408 (EKITMQNLND…SLLEGQDAKM (313 aa)). Residues 132–150 (HLKQSPASPERDYSAYYKT) are linker 1. Residues 151–242 (IEELRIKILE…KNHEEEMKEF (92 aa)) are coil 1B. The tract at residues 243-265 (SNQVVGQVNVEMDATPGIDLTRV) is linker 12. Residues 266–404 (LAEMREQYEA…ATYRSLLEGQ (139 aa)) are coil 2. Positions 405–437 (DAKMTGFNSGGNNTTTSNGSPSSNSGRPDFRKY) are tail. A disordered region spans residues 408–437 (MTGFNSGGNNTTTSNGSPSSNSGRPDFRKY). Residues 409-430 (TGFNSGGNNTTTSNGSPSSNSG) show a composition bias toward low complexity.

It belongs to the intermediate filament family. In terms of assembly, heterotetramer of two type I and two type II keratins. Post-translationally, O-glycosylated; glycans consist of single N-acetylglucosamine residues. In terms of tissue distribution, expressed in tongue epithelia (at protein level). Expressed in upper suprabasal layers of the corneal epithelium (at protein level).

Its function is as follows. Type 1 keratin. Maintains postnatal tongue mucosal cell homeostasis and tissue organization in response to mechanical stress, potentially via regulation of the G1/S phase cyclins CCNE1 and CCNE2. The sequence is that of Keratin, type I cytoskeletal 13 (Krt13) from Mus musculus (Mouse).